The following is a 657-amino-acid chain: SAGA complex subunit SGF73 (657 aa).

Zn(2+) contacts are provided by Cys78, Cys81, His93, and Cys98. Disordered stretches follow at residues 98–225 (CAGA…TEKH), 287–353 (EKRA…VNLT), 469–532 (QQQQ…SQDT), and 572–636 (ESNQ…NVSG). The segment covering 107-118 (TDPRDESTRETI) has biased composition (basic and acidic residues). Acidic residues predominate over residues 131-163 (DDDNSNDNNNDDDDDDDNDDNEDDDDADDDDDN). Composition is skewed to polar residues over residues 174–193 (SSFNPLKRSTSMESANTPNM) and 200–210 (TGTPQTFSSSI). The SCA7 domain occupies 220–286 (NPTEKHLIDF…EHQTKIGAAA (67 aa)). The span at 306 to 321 (QKKHTQQQKQGQRSKQ) shows a compositional bias: basic residues. Low complexity-rich tracts occupy residues 325–336 (NGGKSAKNGGKS) and 469–493 (QQQQQQQQHHSPQAQAQASTQQPTQ). Over residues 504–516 (ATNSSFNANVSSK) the composition is skewed to polar residues. Residues 517-526 (QIQQQQQQQQ) show a composition bias toward low complexity. The span at 572–583 (ESNQDSHLSGTH) shows a compositional bias: polar residues. Low complexity predominate over residues 584-594 (NNNSSKNGNNN). Positions 600–636 (ASISSPNTSVNSIQSPPSVNSVNGSGQGVSTGINVSG) are enriched in polar residues.

Belongs to the ataxin-7 family. As to quaternary structure, component of the 1.8 MDa SAGA (Spt-Ada-Gcn5 acetyltransferase) complex, which is composed of 19 subunits TRA1, SPT7, TAF5, NGG1/ADA3, SGF73, SPT20/ADA5, SPT8, TAF12, TAF6, HFI1/ADA1, UBP8, GCN5, ADA2, SPT3, SGF29, TAF10, TAF9, SGF11 and SUS1. The SAGA complex is composed of 4 modules, namely the HAT (histone acetyltransferase) module (GCN5, ADA2, NGG1/ADA3 and SGF29), the DUB (deubiquitinating) module (UBP8, SGF11, SGF73 and SUS1), the core or TAF (TBP-associated factor) module (TAF5, TAF6, TAF9, TAF10 and TAF12), and the Tra1 or SPT (Suppressor of Ty) module (TRA1, HFI1/ADA1, SPT3, SPT7, SPT8 and SPT20/ADA5). The Tra1/SPT module binds activators, the core module recruits TBP (TATA-binding protein), the HAT module contains the histone H3 acetyltransferase GCN5, and the DUB module comprises the histone H2B deubiquitinase UBP8. Also identified in an altered form of SAGA, named SALSA (SAGA altered, Spt8 absent) or SLIK (SAGA-like) complex, which contains a C-terminal truncated form of SPT7 and is missing SPT8. However, it has been shown that the SAGA and SAGA-like SALSA/SLIK transcriptional coactivators are structurally and biochemically equivalent.

It is found in the nucleus. It localises to the cytoplasm. In terms of biological role, component of the transcription coactivator SAGA complex. SAGA acts as a general cofactor required for essentially all RNA polymerase II transcription. At the promoters, SAGA is required for transcription pre-initiation complex (PIC) recruitment. It influences RNA polymerase II transcriptional activity through different activities such as TBP interaction (via core/TAF module) and promoter selectivity, interaction with transcription activators (via Tra1/SPT module), and chromatin modification through histone acetylation (via HAT module) and deubiquitination (via DUB module). SAGA preferentially acetylates histones H3 (to form H3K9ac, H3K14ac, H3K18ac and H3K23ac) and H2B and deubiquitinates histone H2B. SAGA interacts with DNA via upstream activating sequences (UASs). Also identified in a modified version of SAGA named SALSA or SLIK. The cleavage of SPT7 and the absence of the SPT8 subunit in SLIK neither drive any major conformational differences in its structure compared with SAGA, nor significantly affect HAT, DUB, or DNA-binding activities. SGF73 tethers the DUB module to the rest of the SAGA complex through its central domain and activates the ubiquitin hydrolase UBP8 by maintaining its catalytic domain in an active conformation. SGF73 mediates recruitment of the TREX-2 mRNA export factors SAC3 and THP1 to SAGA, which is crucial to target TREX-2 to the nuclear pore complex (NPC) necessary for export of mRNA. Upon environmental stress, involved in the bypass of the canonical mRNA export process for the immediate export of stress-related transcripts to maintain proteostasis. The protein is SAGA complex subunit SGF73 (SGF73) of Saccharomyces cerevisiae (strain ATCC 204508 / S288c) (Baker's yeast).